A 96-amino-acid chain; its full sequence is MKIRPLNDKLIVERQEVENKSEGGIVLTSQSVKKSNRGKVIAVGLGKRFENGERAAMEVKVGDQIIFNDGYGVKTEKIDGAEYLILSESDVLAIVE.

This sequence belongs to the GroES chaperonin family. As to quaternary structure, heptamer of 7 subunits arranged in a ring. Interacts with the chaperonin GroEL.

Its subcellular location is the cytoplasm. Functionally, together with the chaperonin GroEL, plays an essential role in assisting protein folding. The GroEL-GroES system forms a nano-cage that allows encapsulation of the non-native substrate proteins and provides a physical environment optimized to promote and accelerate protein folding. GroES binds to the apical surface of the GroEL ring, thereby capping the opening of the GroEL channel. The chain is Co-chaperonin GroES 2 from Vibrio parahaemolyticus serotype O3:K6 (strain RIMD 2210633).